The following is a 96-amino-acid chain: Probable quinol oxidase subunit 4 (96 aa).

A run of 3 helical transmembrane segments spans residues Thr-8–Thr-28, Leu-36–His-56, and Phe-68–Met-88.

Belongs to the cytochrome c oxidase bacterial subunit 4 family.

It localises to the cell membrane. It carries out the reaction 2 a quinol + O2 = 2 a quinone + 2 H2O. Its function is as follows. Catalyzes quinol oxidation with the concomitant reduction of oxygen to water. The sequence is that of Probable quinol oxidase subunit 4 (qoxD) from Staphylococcus aureus (strain USA300).